Reading from the N-terminus, the 249-residue chain is Anamorsin homolog (249 aa).

The N-terminal SAM-like domain stretch occupies residues 1-130; that stretch reads MEQFKDLQKS…ETGSAARLSF (130 aa). A linker region spans residues 131–161; the sequence is AKKAAGVNVWKISGDDEELIDEEDLLDEADK. Residues Cys-172, Cys-181, Cys-184, and Cys-186 each contribute to the [2Fe-2S] cluster site. The segment at 172-186 is fe-S binding site A; the sequence is CSTTGKRKACKNCSC. [4Fe-4S] cluster contacts are provided by Cys-210, Cys-213, Cys-221, and Cys-224. 2 consecutive short sequence motifs (cx2C motif) follow at residues 210–213 and 221–224; these read CGNC and CSTC. The interval 210-224 is fe-S binding site B; it reads CGNCYLGDAFRCSTC.

This sequence belongs to the anamorsin family. Monomer. [2Fe-2S] cluster is required as a cofactor. [4Fe-4S] cluster serves as cofactor.

The protein localises to the cytoplasm. Its subcellular location is the mitochondrion intermembrane space. Functionally, component of the cytosolic iron-sulfur (Fe-S) protein assembly (CIA) machinery. Required for the maturation of extramitochondrial Fe-S proteins. Part of an electron transfer chain functioning in an early step of cytosolic Fe-S biogenesis, facilitating the de novo assembly of a [4Fe-4S] cluster on the cytosolic Fe-S scaffold complex. Electrons are transferred from NADPH via a FAD- and FMN-containing diflavin oxidoreductase. Together with the diflavin oxidoreductase, also required for the assembly of the diferric tyrosyl radical cofactor of ribonucleotide reductase (RNR), probably by providing electrons for reduction during radical cofactor maturation in the catalytic small subunit. This chain is Anamorsin homolog, found in Drosophila grimshawi (Hawaiian fruit fly).